Here is a 426-residue protein sequence, read N- to C-terminus: Glutamate-1-semialdehyde 2,1-aminomutase (426 aa).

Lys265 is subject to N6-(pyridoxal phosphate)lysine.

This sequence belongs to the class-III pyridoxal-phosphate-dependent aminotransferase family. HemL subfamily. Homodimer. Pyridoxal 5'-phosphate serves as cofactor.

The protein resides in the cytoplasm. It carries out the reaction (S)-4-amino-5-oxopentanoate = 5-aminolevulinate. The protein operates within porphyrin-containing compound metabolism; protoporphyrin-IX biosynthesis; 5-aminolevulinate from L-glutamyl-tRNA(Glu): step 2/2. This is Glutamate-1-semialdehyde 2,1-aminomutase from Cellvibrio japonicus (strain Ueda107) (Pseudomonas fluorescens subsp. cellulosa).